The sequence spans 264 residues: Small ribosomal subunit protein eS1 (264 aa).

At Lys34 the chain carries N6-acetyllysine; alternate. Lys34 is covalently cross-linked (Glycyl lysine isopeptide (Lys-Gly) (interchain with G-Cter in SUMO2); alternate). At Lys56 the chain carries N6-acetyllysine. At Tyr155 the chain carries ADP-ribosyltyrosine. The disordered stretch occupies residues 232–264; the sequence is HGEGSSSGKATGDETGAKVERADGYEPPVQESV. Residues Ser236 and Ser237 each carry the phosphoserine modification. Residues 242-255 show a composition bias toward basic and acidic residues; the sequence is TGDETGAKVERADG. Lys249 carries the N6-acetyllysine; alternate modification. Lys249 participates in a covalent cross-link: Glycyl lysine isopeptide (Lys-Gly) (interchain with G-Cter in SUMO2); alternate. Residue Tyr256 is modified to Phosphotyrosine. Ser263 carries the post-translational modification Phosphoserine.

This sequence belongs to the eukaryotic ribosomal protein eS1 family. In terms of assembly, component of the small ribosomal subunit. Mature ribosomes consist of a small (40S) and a large (60S) subunit. The 40S subunit contains about 33 different proteins and 1 molecule of RNA (18S). The 60S subunit contains about 49 different proteins and 3 molecules of RNA (28S, 5.8S and 5S). Identified in a IGF2BP1-dependent mRNP granule complex containing untranslated mRNAs. Binds with high affinity to IPO4. Interacts with DDIT3. Part of the small subunit (SSU) processome, composed of more than 70 proteins and the RNA chaperone small nucleolar RNA (snoRNA) U3. Post-translationally, ADP-ribosylated at Tyr-155 by PARP1 in presence of HPF1.

The protein localises to the cytoplasm. It localises to the nucleus. Its subcellular location is the nucleolus. Component of the small ribosomal subunit. The ribosome is a large ribonucleoprotein complex responsible for the synthesis of proteins in the cell. Part of the small subunit (SSU) processome, first precursor of the small eukaryotic ribosomal subunit. During the assembly of the SSU processome in the nucleolus, many ribosome biogenesis factors, an RNA chaperone and ribosomal proteins associate with the nascent pre-rRNA and work in concert to generate RNA folding, modifications, rearrangements and cleavage as well as targeted degradation of pre-ribosomal RNA by the RNA exosome. May play a role during erythropoiesis through regulation of transcription factor DDIT3. The sequence is that of Small ribosomal subunit protein eS1 from Bos taurus (Bovine).